The chain runs to 138 residues: Type II secretion system protein I (138 aa).

Residues 1–6 (MKHQRG) constitute a propeptide, leader sequence. Residue Tyr7 is modified to N-methyltyrosine. A helical transmembrane segment spans residues 7 to 29 (YSLIEVIVAFALLALALTLLLGS).

Belongs to the GSP I family. In terms of assembly, type II secretion is composed of four main components: the outer membrane complex, the inner membrane complex, the cytoplasmic secretion ATPase and the periplasm-spanning pseudopilus. Interacts with core component XpsG. In terms of processing, cleaved by prepilin peptidase. Post-translationally, methylated by prepilin peptidase at the amino group of the N-terminal tyrosine once the leader sequence is cleaved by prepilin peptidase.

It localises to the cell inner membrane. Its function is as follows. Component of the type II secretion system required for the energy-dependent secretion of extracellular factors such as proteases and toxins from the periplasm. Part of the pseudopilus tip complex that is critical for the recognition and binding of secretion substrates. This Xanthomonas campestris pv. campestris (strain ATCC 33913 / DSM 3586 / NCPPB 528 / LMG 568 / P 25) protein is Type II secretion system protein I (xpsI).